Reading from the N-terminus, the 45-residue chain is C-phycocyanin beta subunit (45 aa).

This sequence belongs to the phycobiliprotein family. Heterodimer of an alpha and a beta subunit. The hererodimer further assembles into trimers and the trimers into hexamers. Contains two covalently linked bilin chromophores.

The protein resides in the cellular thylakoid membrane. Functionally, light-harvesting photosynthetic bile pigment-protein from the phycobiliprotein complex (phycobilisome, PBS). Phycocyanin is the major phycobiliprotein in the PBS rod. The chain is C-phycocyanin beta subunit (cpcB) from Limnospira fusiformis (Arthrospira fusiformis).